A 602-amino-acid chain; its full sequence is Elongation factor 4 (602 aa).

One can recognise a tr-type G domain in the interval 7-189; that stretch reads KYIRNFCIIA…KIVDMIPCPE (183 aa). GTP-binding positions include 19 to 24 and 136 to 139; these read DHGKST and NKID.

Belongs to the TRAFAC class translation factor GTPase superfamily. Classic translation factor GTPase family. LepA subfamily.

It is found in the cell membrane. The catalysed reaction is GTP + H2O = GDP + phosphate + H(+). In terms of biological role, required for accurate and efficient protein synthesis under certain stress conditions. May act as a fidelity factor of the translation reaction, by catalyzing a one-codon backward translocation of tRNAs on improperly translocated ribosomes. Back-translocation proceeds from a post-translocation (POST) complex to a pre-translocation (PRE) complex, thus giving elongation factor G a second chance to translocate the tRNAs correctly. Binds to ribosomes in a GTP-dependent manner. In Ruminiclostridium cellulolyticum (strain ATCC 35319 / DSM 5812 / JCM 6584 / H10) (Clostridium cellulolyticum), this protein is Elongation factor 4.